A 359-amino-acid polypeptide reads, in one-letter code: Fructose-like permease IIC component 2 (359 aa).

The 334-residue stretch at 11-344 folds into the PTS EIIC type-2 domain; that stretch reads TRQHLMTGVS…KSLARKNGSS (334 aa). A run of 9 helical transmembrane segments spans residues 19 to 39, 60 to 80, 99 to 119, 135 to 155, 176 to 196, 216 to 236, 251 to 271, 290 to 310, and 314 to 334; these read VSHM…SVML, IGVA…GYSI, FGAG…VVHY, IFII…WGLG, SIVM…GGPV, VAIA…ATLI, AALV…AAAD, AALV…LPVV, and LGYI…VNVL.

Its subcellular location is the cell inner membrane. In terms of biological role, the phosphoenolpyruvate-dependent sugar phosphotransferase system (PTS), a major carbohydrate active -transport system, catalyzes the phosphorylation of incoming sugar substrates concomitant with their translocation across the cell membrane. In Escherichia coli (strain K12), this protein is Fructose-like permease IIC component 2 (frwC).